The chain runs to 164 residues: Phosphopantetheine adenylyltransferase (164 aa).

Residue threonine 9 participates in substrate binding. ATP-binding positions include 9-10 (TF) and histidine 17. 3 residues coordinate substrate: lysine 41, threonine 76, and arginine 90. ATP is bound by residues 91–93 (GLR), glutamate 101, and 126–132 (YQFVSSS).

Belongs to the bacterial CoaD family. In terms of assembly, homohexamer. It depends on Mg(2+) as a cofactor.

It localises to the cytoplasm. The enzyme catalyses (R)-4'-phosphopantetheine + ATP + H(+) = 3'-dephospho-CoA + diphosphate. Its pathway is cofactor biosynthesis; coenzyme A biosynthesis; CoA from (R)-pantothenate: step 4/5. Reversibly transfers an adenylyl group from ATP to 4'-phosphopantetheine, yielding dephospho-CoA (dPCoA) and pyrophosphate. The polypeptide is Phosphopantetheine adenylyltransferase (Coprothermobacter proteolyticus (strain ATCC 35245 / DSM 5265 / OCM 4 / BT)).